The sequence spans 350 residues: Quinolinate phosphoribosyltransferase [decarboxylating] 1b (350 aa).

Residues Arg141, 172-174 (TRK), Arg196, Lys206, Glu239, Asp266, 298-300 (SGN), and 319-321 (SGA) each bind substrate.

This sequence belongs to the NadC/ModD family.

It carries out the reaction nicotinate beta-D-ribonucleotide + CO2 + diphosphate = quinolinate + 5-phospho-alpha-D-ribose 1-diphosphate + 2 H(+). It functions in the pathway alkaloid biosynthesis; nicotine biosynthesis. The protein operates within cofactor biosynthesis; NAD(+) biosynthesis; nicotinate D-ribonucleotide from quinolinate: step 1/1. In terms of biological role, involved in the biosynthesis of pyridine alkaloid natural products, leading mainly to the production of anabasine, anatabine, nicotine and nornicotine, effective deterrents against herbivores with antiparasitic and pesticide properties (neurotoxins); nornicotine serves as the precursor in the synthesis of the carcinogen compound N'-nitrosonornicotine (NNN). Involved in the catabolism of quinolinic acid (QA). The sequence is that of Quinolinate phosphoribosyltransferase [decarboxylating] 1b from Nicotiana tabacum (Common tobacco).